We begin with the raw amino-acid sequence, 157 residues long: Phosphopantetheine adenylyltransferase (157 aa).

S9 lines the substrate pocket. ATP is bound by residues 9 to 10 (SF) and H17. Substrate contacts are provided by K41, T73, and R87. ATP-binding positions include 88 to 90 (GIR), E98, and 122 to 128 (YQDISSS).

The protein belongs to the bacterial CoaD family. As to quaternary structure, homohexamer. Mg(2+) serves as cofactor.

It localises to the cytoplasm. The enzyme catalyses (R)-4'-phosphopantetheine + ATP + H(+) = 3'-dephospho-CoA + diphosphate. The protein operates within cofactor biosynthesis; coenzyme A biosynthesis; CoA from (R)-pantothenate: step 4/5. In terms of biological role, reversibly transfers an adenylyl group from ATP to 4'-phosphopantetheine, yielding dephospho-CoA (dPCoA) and pyrophosphate. The protein is Phosphopantetheine adenylyltransferase of Oenococcus oeni (strain ATCC BAA-331 / PSU-1).